A 230-amino-acid polypeptide reads, in one-letter code: Cytidylate kinase (230 aa).

12-20 (GPSGTGKST) contacts ATP.

The protein belongs to the cytidylate kinase family. Type 1 subfamily.

Its subcellular location is the cytoplasm. The catalysed reaction is CMP + ATP = CDP + ADP. It carries out the reaction dCMP + ATP = dCDP + ADP. The chain is Cytidylate kinase from Corynebacterium efficiens (strain DSM 44549 / YS-314 / AJ 12310 / JCM 11189 / NBRC 100395).